We begin with the raw amino-acid sequence, 394 residues long: Phosphoglycerate kinase (394 aa).

Substrate-binding positions include 21–23, arginine 36, 59–62, arginine 118, and arginine 151; these read DFN and HLGR. At serine 183 the chain carries Phosphoserine. Residues lysine 201 and glycine 292 each coordinate ATP. Position 299 is a phosphothreonine (threonine 299). Residues glutamate 323 and 350 to 353 each bind ATP; that span reads GGDS.

This sequence belongs to the phosphoglycerate kinase family. Monomer.

It localises to the cytoplasm. It catalyses the reaction (2R)-3-phosphoglycerate + ATP = (2R)-3-phospho-glyceroyl phosphate + ADP. The protein operates within carbohydrate degradation; glycolysis; pyruvate from D-glyceraldehyde 3-phosphate: step 2/5. The polypeptide is Phosphoglycerate kinase (Bacillus cereus (strain ATCC 10987 / NRS 248)).